The following is a 61-amino-acid chain: Metallothionein-2 (61 aa).

Met-1 bears the N-acetylmethionine mark. The segment at 1–29 (MDPNCSCVAGDSCTCAGSCKCKECKCTSC) is beta. Positions 5, 7, 13, 15, 19, 21, 24, 26, 29, 33, 34, 36, 37, 41, 44, 48, 50, 57, 59, and 60 each coordinate a divalent metal cation. Residues 20–25 (KCKECK) are antigenic epitope. Residues 30–61 (KKSCCSCCPVGCAKCAQGCICKGASDKCNCCA) are alpha.

This sequence belongs to the metallothionein superfamily. Type 1 family.

Its function is as follows. Metallothioneins have a high content of cysteine residues that bind various heavy metals; these proteins are transcriptionally regulated by both heavy metals and glucocorticoids. This chain is Metallothionein-2 (MT2), found in Macaca fascicularis (Crab-eating macaque).